The primary structure comprises 290 residues: Light-independent protochlorophyllide reductase iron-sulfur ATP-binding protein (290 aa).

ATP is bound by residues 10–15 (GIGKST) and Lys-39. A Mg(2+)-binding site is contributed by Ser-14. [4Fe-4S] cluster-binding residues include Cys-95 and Cys-129. Residue 180–181 (NR) coordinates ATP.

It belongs to the NifH/BchL/ChlL family. In terms of assembly, homodimer. Protochlorophyllide reductase is composed of three subunits; ChlL, ChlN and ChlB. [4Fe-4S] cluster serves as cofactor.

The protein localises to the plastid. The protein resides in the chloroplast. The catalysed reaction is chlorophyllide a + oxidized 2[4Fe-4S]-[ferredoxin] + 2 ADP + 2 phosphate = protochlorophyllide a + reduced 2[4Fe-4S]-[ferredoxin] + 2 ATP + 2 H2O. It participates in porphyrin-containing compound metabolism; chlorophyll biosynthesis (light-independent). Functionally, component of the dark-operative protochlorophyllide reductase (DPOR) that uses Mg-ATP and reduced ferredoxin to reduce ring D of protochlorophyllide (Pchlide) to form chlorophyllide a (Chlide). This reaction is light-independent. The L component serves as a unique electron donor to the NB-component of the complex, and binds Mg-ATP. This is Light-independent protochlorophyllide reductase iron-sulfur ATP-binding protein from Cycas taitungensis (Prince sago).